The primary structure comprises 1044 residues: DEMETER-like protein 3 (1044 aa).

The span at 1–15 (MLTDGSQHTYQNGET) shows a compositional bias: polar residues. The disordered stretch occupies residues 1-107 (MLTDGSQHTY…KPRNPATTRL (107 aa)). Residues 16 to 30 (KNSKEHERKCDESAH) are compositionally biased toward basic and acidic residues. Positions 38–53 (THKKKEKKNSKEKHGI) are enriched in basic residues. Over residues 54 to 66 (KHSESEHLQDDIS) the composition is skewed to basic and acidic residues. The segment covering 71-89 (GKGRRRNSKGTPKKLRFNR) has biased composition (basic residues). Residues 348 to 445 (KVNLDPETIK…AFMSVAAKFP (98 aa)) are DEMETER. [4Fe-4S] cluster-binding residues include C678, C685, C688, and C694. The tract at residues 1024 to 1044 (VRRLHTPPDERGPKFMSDDDI) is disordered.

This sequence belongs to the DNA glycosylase family. DEMETER subfamily. [4Fe-4S] cluster serves as cofactor.

The protein localises to the nucleus. Potential transcriptional activator that may act by nicking the target promoter. Catalyzes the release of 5-methylcytosine (5-meC) from DNA by a glycosylase/lyase mechanism. The chain is DEMETER-like protein 3 (DML3) from Arabidopsis thaliana (Mouse-ear cress).